The following is a 735-amino-acid chain: Probable E3 ubiquitin-protein ligase MID2 (735 aa).

An RING-type zinc finger spans residues 30 to 80; sequence CPICLELFEDPLLLPCAHSLCFSCAHRILVSSCSSGESIEPITAFQCPTCR. The segment at 137–184 adopts a B box-type 1; degenerate zinc-finger fold; that stretch reads IACQFCEQDPPRDAVKTCITCEVSYCDRCLRATHPNKKPFTSHRLVEP. The B box-type 2 zinc finger occupies 190 to 232; that stretch reads LRGITCLDHENEKVNMYCVSDDQLICALCKLVGRHRDHQVASL. Zn(2+) contacts are provided by Cys195, His198, Cys218, and His224. Residues 233–301 are a coiled coil; it reads NDRFEKLKQT…IIQQRKQMIA (69 aa). In terms of domain architecture, COS spans 340–399; it reads LKENDQARFLQSAKNIAERVAMATASSQVLIPDINFNDAFENFALDFSREKKLLEGLDYL. The 134-residue stretch at 398–531 folds into the Fibronectin type-III domain; sequence YLTAPNPPSI…RNSEPTRLKT (134 aa). The region spanning 516–709 is the B30.2/SPRY domain; that stretch reads INQAGSRNSE…ILSGLPAPDF (194 aa).

The protein belongs to the TRIM/RBCC family. In terms of assembly, homodimer or heterodimer with MID1. Interacts with IGBP1. In terms of processing, phosphorylated on serine and threonine residues. As to expression, low level in fetal kidney and lung, and in adult prostate, ovary and small intestine.

Its subcellular location is the cytoplasm. The protein localises to the cytoskeleton. It carries out the reaction S-ubiquitinyl-[E2 ubiquitin-conjugating enzyme]-L-cysteine + [acceptor protein]-L-lysine = [E2 ubiquitin-conjugating enzyme]-L-cysteine + N(6)-ubiquitinyl-[acceptor protein]-L-lysine.. The protein operates within protein modification; protein ubiquitination. Functionally, E3 ubiquitin ligase that plays a role in microtubule stabilization. Mediates the 'Lys-48'-linked polyubiquitination of LRRK2 to drive its localization to microtubules and its proteasomal degradation in neurons. This ubiquitination inhibits LRRK2 kinase activation by RAB29. The chain is Probable E3 ubiquitin-protein ligase MID2 (MID2) from Homo sapiens (Human).